The primary structure comprises 353 residues: rRNA methyltransferase 1, mitochondrial (353 aa).

Residues 1–20 (MALLSTVRGATWGRLVTRHF) constitute a mitochondrion transit peptide. Residues 311-353 (PTEGERRQLLQDPQEPSARSEGLSMAQHPGLSSGPEKERQNEG) form a disordered region.

This sequence belongs to the class IV-like SAM-binding methyltransferase superfamily. RNA methyltransferase TrmH family.

The protein localises to the mitochondrion matrix. The catalysed reaction is guanosine(1145) in 16S rRNA + S-adenosyl-L-methionine = 2'-O-methylguanosine(1145) in 16S rRNA + S-adenosyl-L-homocysteine + H(+). S-adenosyl-L-methionine-dependent 2'-O-ribose methyltransferase that catalyzes the formation of 2'-O-methylguanosine at position 1145 (Gm1145) in the 16S mitochondrial large subunit ribosomal RNA (mtLSU rRNA), a universally conserved modification in the peptidyl transferase domain of the mtLSU rRNA. The chain is rRNA methyltransferase 1, mitochondrial from Homo sapiens (Human).